The sequence spans 946 residues: Inter-alpha-trypsin inhibitor heavy chain H2 (946 aa).

An N-terminal signal peptide occupies residues 1-18 (MQRLACVLIWLFLLEEQA). A propeptide spanning residues 19–54 (FEIPANEYSEFAGYSNLVELAPDKFPFVQENRRYQR) is cleaved from the precursor. Residues 56–185 (LPEESGEMTD…KVQFELHYQE (130 aa)) enclose the VIT domain. Phosphoserine is present on Ser-60. N-linked (GlcNAc...) asparagine glycans are attached at residues Asn-118 and Asn-263. 4-carboxyglutamate is present on residues Glu-282 and Glu-283. Residues 308–468 (PKNILFVIDV…YDFLKRLSNE (161 aa)) form the VWFA domain. N-linked (GlcNAc...) asparagine glycosylation is present at Asn-445. Ser-466 carries the phosphoserine modification. N-linked (GlcNAc...) asparagine glycosylation occurs at Asn-578. Asp-702 carries the aspartate 1-(chondroitin 4-sulfate)-ester modification. A propeptide spanning residues 703–946 (PHFIIYLPKS…PQLYSFLKRP (244 aa)) is cleaved from the precursor. Ser-886 carries the phosphoserine modification.

This sequence belongs to the ITIH family. As to quaternary structure, I-alpha-I plasma protease inhibitors are assembled from one or two heavy chains (HC) and one light chain, bikunin. Inter-alpha-inhibitor (I-alpha-I) is composed of ITIH1/HC1, ITIH2/HC2 and bikunin. In terms of processing, heavy chains are linked to bikunin via chondroitin 4-sulfate esterified to the alpha-carboxyl of the C-terminal aspartate after propeptide cleavage. Phosphorylated by FAM20C in the extracellular medium.

Its subcellular location is the secreted. In terms of biological role, may act as a carrier of hyaluronan in serum or as a binding protein between hyaluronan and other matrix protein, including those on cell surfaces in tissues to regulate the localization, synthesis and degradation of hyaluronan which are essential to cells undergoing biological processes. The sequence is that of Inter-alpha-trypsin inhibitor heavy chain H2 (ITIH2) from Mesocricetus auratus (Golden hamster).